The sequence spans 658 residues: Serine/threonine-protein kinase shk1/pak1 (658 aa).

4 disordered regions span residues 1 to 21, 39 to 104, 126 to 147, and 213 to 365; these read MERG…ITPI, RKLK…SYDE, GGSS…STVI, and GAKP…QQSN. Residues 66-98 show a composition bias toward polar residues; sequence PLSQSRTTVSRVSLGSRQHSSSSIRKLQTNVSD. The segment covering 129 to 140 has biased composition (low complexity); sequence SPTSSYGSGSAS. Residues 147-160 form the CRIB domain; that stretch reads ISSPFDPKHVTHVG. Low complexity-rich tracts occupy residues 226-254 and 262-272; these read PLLS…LYPS and ASSSSSPLLSS. Positions 273-300 are enriched in polar residues; sequence QTVKTTTSNASRQPSPLVSSKSTDNIIR. A phosphoserine mark is found at S301 and S303. Positions 386-637 constitute a Protein kinase domain; that stretch reads YRNFVKIGQG…SGELLRHPFL (252 aa). ATP-binding positions include 392-400 and K415; that span reads IGQGASGDV. Residue D505 is the Proton acceptor of the active site.

It belongs to the protein kinase superfamily. STE Ser/Thr protein kinase family. STE20 subfamily. In terms of assembly, forms an activated complex with GTP-bound ras-like cdc42. Interacts with skb1 and the SH3 domain of skb5 via its amino-terminal regulatory domain. Skb1, cdc42 and shk1 are able to form a ternary complex in vivo. Interacts with rga8 and may interact with byr2. In terms of processing, autophosphorylated on serine residues.

It is found in the cytoplasm. It localises to the cytoskeleton. The protein localises to the spindle. It carries out the reaction L-seryl-[protein] + ATP = O-phospho-L-seryl-[protein] + ADP + H(+). The catalysed reaction is L-threonyl-[protein] + ATP = O-phospho-L-threonyl-[protein] + ADP + H(+). MAP4K component of the MAPK pathway required for the mating pheromone response. Phosphorylates histone H2B to form H2BS10ph. Phosphorylates tea1. Required for skb1-dependent mitotic inhibitory function. Regulates microtubule dynamics and cell polarity. In Schizosaccharomyces pombe (strain 972 / ATCC 24843) (Fission yeast), this protein is Serine/threonine-protein kinase shk1/pak1 (shk1).